The primary structure comprises 168 residues: Transcriptional regulator MraZ (168 aa).

SpoVT-AbrB domains follow at residues 8–51 (EYNQ…GGDR) and 90–140 (ALNM…KADT).

It belongs to the MraZ family. Forms oligomers.

The protein localises to the cytoplasm. The protein resides in the nucleoid. In Cereibacter sphaeroides (strain ATCC 17029 / ATH 2.4.9) (Rhodobacter sphaeroides), this protein is Transcriptional regulator MraZ.